The primary structure comprises 268 residues: ClpXP adapter protein SpxH (268 aa).

Belongs to the SpxH family. Interacts with Spx.

It localises to the cytoplasm. Functionally, adapter protein required for efficient degradation of Spx by ClpXP under non-stress conditions. Interaction with Spx stabilizes Spx and exposes the C-terminus of Spx for recognition and proteolysis by ClpXP. This chain is ClpXP adapter protein SpxH, found in Staphylococcus aureus (strain Mu3 / ATCC 700698).